The following is a 727-amino-acid chain: ABC transporter G family member 6 (727 aa).

The ABC transporter domain occupies leucine 68–glutamate 333. ATP is bound at residue glycine 126–serine 133. The region spanning valine 421–phenylalanine 631 is the ABC transmembrane type-2 domain. A run of 6 helical transmembrane segments spans residues leucine 440–tryptophan 460, cysteine 475–leucine 495, leucine 517–isoleucine 537, alanine 560–methionine 580, leucine 581–isoleucine 601, and leucine 700–leucine 720.

Belongs to the ABC transporter superfamily. ABCG family. Eye pigment precursor importer (TC 3.A.1.204) subfamily.

The protein localises to the membrane. The polypeptide is ABC transporter G family member 6 (ABCG6) (Arabidopsis thaliana (Mouse-ear cress)).